The following is a 102-amino-acid chain: MGALTKADLAEHLHAELGFSKREAKSMVEAFFEEIRSCLRENEQVKLSGFGNFDLRDKRERPGRNPKTGEEIPISARRVVTFRPGQKLKARVEDFDESKVVH.

The protein belongs to the bacterial histone-like protein family. As to quaternary structure, heterodimer of an alpha and a beta chain.

This protein is one of the two subunits of integration host factor, a specific DNA-binding protein that functions in genetic recombination as well as in transcriptional and translational control. The chain is Integration host factor subunit alpha from Chromohalobacter salexigens (strain ATCC BAA-138 / DSM 3043 / CIP 106854 / NCIMB 13768 / 1H11).